We begin with the raw amino-acid sequence, 156 residues long: Deoxyuridine 5'-triphosphate nucleotidohydrolase (156 aa).

Substrate is bound by residues 76 to 78 (RSG), N89, 93 to 95 (TVD), and K103.

The protein belongs to the dUTPase family. Requires Mg(2+) as cofactor.

It carries out the reaction dUTP + H2O = dUMP + diphosphate + H(+). The protein operates within pyrimidine metabolism; dUMP biosynthesis; dUMP from dCTP (dUTP route): step 2/2. In terms of biological role, this enzyme is involved in nucleotide metabolism: it produces dUMP, the immediate precursor of thymidine nucleotides and it decreases the intracellular concentration of dUTP so that uracil cannot be incorporated into DNA. This chain is Deoxyuridine 5'-triphosphate nucleotidohydrolase, found in Rhizobium johnstonii (strain DSM 114642 / LMG 32736 / 3841) (Rhizobium leguminosarum bv. viciae).